A 481-amino-acid polypeptide reads, in one-letter code: Aspartyl/glutamyl-tRNA(Asn/Gln) amidotransferase subunit B (481 aa).

It belongs to the GatB/GatE family. GatB subfamily. In terms of assembly, heterotrimer of A, B and C subunits.

It carries out the reaction L-glutamyl-tRNA(Gln) + L-glutamine + ATP + H2O = L-glutaminyl-tRNA(Gln) + L-glutamate + ADP + phosphate + H(+). The enzyme catalyses L-aspartyl-tRNA(Asn) + L-glutamine + ATP + H2O = L-asparaginyl-tRNA(Asn) + L-glutamate + ADP + phosphate + 2 H(+). Allows the formation of correctly charged Asn-tRNA(Asn) or Gln-tRNA(Gln) through the transamidation of misacylated Asp-tRNA(Asn) or Glu-tRNA(Gln) in organisms which lack either or both of asparaginyl-tRNA or glutaminyl-tRNA synthetases. The reaction takes place in the presence of glutamine and ATP through an activated phospho-Asp-tRNA(Asn) or phospho-Glu-tRNA(Gln). The sequence is that of Aspartyl/glutamyl-tRNA(Asn/Gln) amidotransferase subunit B from Pseudomonas savastanoi pv. phaseolicola (strain 1448A / Race 6) (Pseudomonas syringae pv. phaseolicola (strain 1448A / Race 6)).